Reading from the N-terminus, the 65-residue chain is Cold shock-like protein CspC (65 aa).

Positions 3 to 62 constitute a CSD domain; the sequence is GRVKWFNAEKGFGFIEREDGDDVFVHFSAIQQDGYKSLEEGQQVEFDIVDGARGPQAANV.

In terms of assembly, homodimer.

The protein resides in the cytoplasm. The sequence is that of Cold shock-like protein CspC (cspC) from Bacillus cereus.